Consider the following 118-residue polypeptide: Basic leucine zipper transcriptional factor ATF-like 3 (118 aa).

Residues 1-69 (MSQGPPAVSV…HESLEQENSV (69 aa)) are disordered. Serine 2 and serine 24 each carry phosphoserine. The region spanning 28–91 (DDRKVRRREK…RHLSEVLKEH (64 aa)) is the bZIP domain. A basic motif region spans residues 30-55 (RKVRRREKNRVAAQRSRKKQTQKADK). Positions 51–69 (QKADKLHEEHESLEQENSV) are enriched in basic and acidic residues. The segment at 56–84 (LHEEHESLEQENSVLRREISKLKEELRHL) is leucine-zipper.

This sequence belongs to the bZIP family. As to quaternary structure, heterodimer; heterodimerizes with JUN family proteins. Interacts with JUN. As to expression, highly expressed in CD8-alpha(+) classical dendritic cells (cDCs), with low to absent expression in other immune cells and non-immune tissues.

It is found in the nucleus. Functionally, AP-1 family transcription factor that controls the differentiation of CD8(+) thymic conventional dendritic cells in the immune system. Acts via the formation of a heterodimer with JUN family proteins that recognizes and binds DNA sequence 5'-TGA[CG]TCA-3' and regulates expression of target genes. Required for development of CD8-alpha(+) classical dendritic cells (cDCs) and related CD103(+) dendritic cells that cross-present antigens to CD8 T-cells and produce interleukin-12 (IL12) in response to pathogens. The polypeptide is Basic leucine zipper transcriptional factor ATF-like 3 (Batf3) (Mus musculus (Mouse)).